We begin with the raw amino-acid sequence, 351 residues long: MAASRSRRNNAGNKIAHLLNEEEEDDFYKTSYGGFQEDEEDKEYEQKDEEEDVVDSDFSIDENDEPVSDQEEAPEKKRKRGVVNTKAYKETKPAVKKETKATPALHKKRPGGGVTKRRPRPRFTVLDSGRKSIRTSTAIKTQATKIRLKELDDARKRKKKKVRVEDYMPTQEELLEEAKITEEENTKSLEKFQKMELEKKKSRPTKRTFSGPTIRYHSLTMPAMRKPTRGANPAVDSKDLAGKCERTFVTIENDFNDKVFQSLFRHKAPPKASNGICPITRLPARYFDPITQQPYYSIQAFKILREAYYMQLEQQGGGSEQPELAKWLEWRKLVKENRLKASAAASKNGDN.

The segment at 1–136 (MAASRSRRNN…DSGRKSIRTS (136 aa)) is disordered. Residues 36 to 72 (QEDEEDKEYEQKDEEEDVVDSDFSIDENDEPVSDQEE) are compositionally biased toward acidic residues. Phosphoserine occurs at positions 56, 59, and 68. A compositionally biased stretch (basic and acidic residues) spans 87 to 100 (AYKETKPAVKKETK). Basic residues predominate over residues 105 to 121 (LHKKRPGGGVTKRRPRP). The stretch at 142–202 (QATKIRLKEL…QKMELEKKKS (61 aa)) forms a coiled coil. The DNA-binding element occupies 156 to 208 (KRKKKKVRVEDYMPTQEELLEEAKITEEENTKSLEKFQKMELEKKKSRPTKRT).

This sequence belongs to the VPS72/YL1 family. In terms of assembly, interacts with H2AV. Component of the Tip60 chromatin-remodeling complex which contains the catalytic subunit Tip60 and the subunits Domino, Tra1, Brd8, E(Pc), DMAP1, Pontin, Reptin, Ing3, Act87E, BAP55, Mrg15, MrgBP, Gas41 and YL-1.

The protein resides in the nucleus. In terms of biological role, part of the Tip60 chromatin-remodeling complex which is involved in DNA repair. Upon induction of DNA double-strand breaks, this complex acetylates phosphorylated H2AV in nucleosomes and exchanges it with unmodified H2AV. This is Vacuolar protein sorting-associated protein 72 homolog (YL-1) from Drosophila melanogaster (Fruit fly).